The chain runs to 320 residues: Lipoyl synthase (320 aa).

Residues 1–28 are disordered; that stretch reads MVTVVDRVTDRRLRHPEKAHRPDTSVQK. The segment covering 19 to 28 has biased composition (basic and acidic residues); it reads AHRPDTSVQK. [4Fe-4S] cluster is bound by residues cysteine 59, cysteine 64, cysteine 70, cysteine 85, cysteine 89, cysteine 92, and serine 298. The region spanning 71-287 is the Radical SAM core domain; the sequence is WSQRHASFMI…AKIGKVKGFL (217 aa).

The protein belongs to the radical SAM superfamily. Lipoyl synthase family. The cofactor is [4Fe-4S] cluster.

It is found in the cytoplasm. It catalyses the reaction [[Fe-S] cluster scaffold protein carrying a second [4Fe-4S](2+) cluster] + N(6)-octanoyl-L-lysyl-[protein] + 2 oxidized [2Fe-2S]-[ferredoxin] + 2 S-adenosyl-L-methionine + 4 H(+) = [[Fe-S] cluster scaffold protein] + N(6)-[(R)-dihydrolipoyl]-L-lysyl-[protein] + 4 Fe(3+) + 2 hydrogen sulfide + 2 5'-deoxyadenosine + 2 L-methionine + 2 reduced [2Fe-2S]-[ferredoxin]. It participates in protein modification; protein lipoylation via endogenous pathway; protein N(6)-(lipoyl)lysine from octanoyl-[acyl-carrier-protein]: step 2/2. Catalyzes the radical-mediated insertion of two sulfur atoms into the C-6 and C-8 positions of the octanoyl moiety bound to the lipoyl domains of lipoate-dependent enzymes, thereby converting the octanoylated domains into lipoylated derivatives. In Bartonella henselae (strain ATCC 49882 / DSM 28221 / CCUG 30454 / Houston 1) (Rochalimaea henselae), this protein is Lipoyl synthase.